The sequence spans 286 residues: Putative short-chain type dehydrogenase/reductase Rv0148 (286 aa).

11 to 35 (VTGAGGGLGREYALTLAGEGASVVV) contributes to the NAD(+) binding site. S151 provides a ligand contact to substrate. Y164 serves as the catalytic Proton acceptor. K280 participates in a covalent cross-link: Isoglutamyl lysine isopeptide (Lys-Gln) (interchain with Q-Cter in protein Pup).

Belongs to the short-chain dehydrogenases/reductases (SDR) family. Pupylated at Lys-280 by the prokaryotic ubiquitin-like protein Pup, which probably leads to its degradation by the proteasome.

The sequence is that of Putative short-chain type dehydrogenase/reductase Rv0148 from Mycobacterium tuberculosis (strain ATCC 25618 / H37Rv).